The primary structure comprises 259 residues: Proteasome subunit alpha 1 (259 aa).

Residues 231–259 (LVPAEPAAASESAPEPKPDTETKPADTQD) are disordered. Residues 233 to 243 (PAEPAAASESA) are compositionally biased toward low complexity. Basic and acidic residues predominate over residues 244-259 (PEPKPDTETKPADTQD).

The protein belongs to the peptidase T1A family. As to quaternary structure, the 20S proteasome core is composed of 14 alpha and 14 beta subunits that assemble into four stacked heptameric rings, resulting in a barrel-shaped structure. The two inner rings, each composed of seven catalytic beta subunits, are sandwiched by two outer rings, each composed of seven alpha subunits. All four combinations of alpha- and beta-subunits (beta2-alpha1, beta2-alpha2, beta1-alpha2 and beta1-alpha1) yield fully assembled and proteolytically active proteasomes. The catalytic chamber with the active sites is on the inside of the barrel. Has probably a gated structure, the ends of the cylinder being occluded by the N-termini of the alpha-subunits. Is likely capped by the proteasome-associated ATPase, ARC. The N-terminus is blocked.

Its subcellular location is the cytoplasm. Its pathway is protein degradation; proteasomal Pup-dependent pathway. The formation of the proteasomal ATPase ARC-20S proteasome complex, likely via the docking of the C-termini of ARC into the intersubunit pockets in the alpha-rings, may trigger opening of the gate for substrate entry. Interconversion between the open-gate and close-gate conformations leads to a dynamic regulation of the 20S proteasome proteolysis activity. Its function is as follows. Component of the proteasome core, a large protease complex with broad specificity involved in protein degradation. The R.erythropolis proteasomes are able to cleave oligopeptides after Tyr, Phe and Leu, very poorly after Arg but not after Glu. Thus, displays chymotrypsin-like activity, low trypsin-like activity but no caspase-like activity. The sequence is that of Proteasome subunit alpha 1 from Rhodococcus erythropolis (Arthrobacter picolinophilus).